The sequence spans 33 residues: Sucrose-6-phosphate hydrolase (33 aa).

15–18 contributes to the substrate binding site; that stretch reads PLQE. Residue Glu18 is part of the active site.

The protein belongs to the glycosyl hydrolase 32 family.

It carries out the reaction Hydrolysis of terminal non-reducing beta-D-fructofuranoside residues in beta-D-fructofuranosides.. The protein operates within glycan biosynthesis; sucrose metabolism. The sequence is that of Sucrose-6-phosphate hydrolase from Fusobacterium mortiferum.